The sequence spans 195 residues: Putative kinase protein 143R (195 aa).

Position 8-16 (8-16) interacts with ATP; it reads GIIGAGKST. Substrate contacts are provided by E31, Y43, and Q54. The active-site Proton acceptor is the E78. The substrate site is built by R79 and E142.

Belongs to the DCK/DGK family.

The protein is Putative kinase protein 143R of Acheta domesticus (House cricket).